A 324-amino-acid chain; its full sequence is Biotin synthase 1 (324 aa).

A Radical SAM core domain is found at 37-256 (NAIETASLLS…VALARILMPA (220 aa)). Residues C52, C56, and C59 each coordinate [4Fe-4S] cluster. Residues C96, C127, C187, and R260 each contribute to the [2Fe-2S] cluster site.

Belongs to the radical SAM superfamily. Biotin synthase family. Homodimer. [4Fe-4S] cluster is required as a cofactor. The cofactor is [2Fe-2S] cluster.

The catalysed reaction is (4R,5S)-dethiobiotin + (sulfur carrier)-SH + 2 reduced [2Fe-2S]-[ferredoxin] + 2 S-adenosyl-L-methionine = (sulfur carrier)-H + biotin + 2 5'-deoxyadenosine + 2 L-methionine + 2 oxidized [2Fe-2S]-[ferredoxin]. Its pathway is cofactor biosynthesis; biotin biosynthesis; biotin from 7,8-diaminononanoate: step 2/2. Catalyzes the conversion of dethiobiotin (DTB) to biotin by the insertion of a sulfur atom into dethiobiotin via a radical-based mechanism. This chain is Biotin synthase 1, found in Paracoccus denitrificans (strain Pd 1222).